The sequence spans 425 residues: Enolase (425 aa).

Residue Gln-162 coordinates (2R)-2-phosphoglycerate. Residue Glu-204 is the Proton donor of the active site. Mg(2+) contacts are provided by Asp-241, Glu-282, and Asp-309. (2R)-2-phosphoglycerate-binding residues include Lys-334, Arg-363, Ser-364, and Lys-385. Residue Lys-334 is the Proton acceptor of the active site.

It belongs to the enolase family. Mg(2+) is required as a cofactor.

It is found in the cytoplasm. The protein resides in the secreted. It localises to the cell surface. The enzyme catalyses (2R)-2-phosphoglycerate = phosphoenolpyruvate + H2O. The protein operates within carbohydrate degradation; glycolysis; pyruvate from D-glyceraldehyde 3-phosphate: step 4/5. In terms of biological role, catalyzes the reversible conversion of 2-phosphoglycerate (2-PG) into phosphoenolpyruvate (PEP). It is essential for the degradation of carbohydrates via glycolysis. This Corynebacterium diphtheriae (strain ATCC 700971 / NCTC 13129 / Biotype gravis) protein is Enolase.